Here is a 113-residue protein sequence, read N- to C-terminus: Gas vesicle protein I2 (113 aa).

Residues 1 to 93 (MTPTNRHTHG…TVPEQPTHAT (93 aa)) are disordered. The segment covering 11-22 (QNAQHARRNAQQ) has biased composition (low complexity). Over residues 52 to 63 (EQPTSDTTNPAA) the composition is skewed to polar residues. A compositionally biased stretch (low complexity) spans 69-81 (AQRTNAQNAARNA). Residues 82–93 (HSTVPEQPTHAT) are compositionally biased toward polar residues.

This sequence belongs to the gas vesicle GvpI family. In terms of assembly, gvpF to GvpM interact with each other in vitro, and may form multi-subunit complex(es). Interacts with GvpC and GvpO.

It is found in the gas vesicle. Its function is as follows. Proteins GvpF to GvpM might be involved in nucleating gas vesicle formation. A minor component of the gas vesicle. Gas vesicles are hollow, gas filled proteinaceous nanostructures found in several microbial planktonic microorganisms. They allow positioning of halobacteria at the optimal depth for growth in the poorly aerated, shallow brine pools of their habitat. In terms of biological role, expression of 2 c-vac DNA fragments containing 2 divergently transcribed regions (gvpE-gvpF-gvpG-gvpH-gvpI-gvpJ-gvpK-gvpL-gvpM and gvpA-gvpC-gvpN-gvpO) allows H.volcanii to produce gas vesicles. The sequence is that of Gas vesicle protein I2 from Halobacterium salinarum (strain ATCC 700922 / JCM 11081 / NRC-1) (Halobacterium halobium).